The chain runs to 469 residues: 3-isopropylmalate dehydratase large subunit (469 aa).

Cys-349, Cys-410, and Cys-413 together coordinate [4Fe-4S] cluster.

Belongs to the aconitase/IPM isomerase family. LeuC type 1 subfamily. Heterodimer of LeuC and LeuD. The cofactor is [4Fe-4S] cluster.

The enzyme catalyses (2R,3S)-3-isopropylmalate = (2S)-2-isopropylmalate. The protein operates within amino-acid biosynthesis; L-leucine biosynthesis; L-leucine from 3-methyl-2-oxobutanoate: step 2/4. Its function is as follows. Catalyzes the isomerization between 2-isopropylmalate and 3-isopropylmalate, via the formation of 2-isopropylmaleate. The polypeptide is 3-isopropylmalate dehydratase large subunit (Azoarcus sp. (strain BH72)).